The chain runs to 476 residues: ATP synthase subunit beta 2 (476 aa).

160 to 167 (GGAGVGKT) contacts ATP.

The protein belongs to the ATPase alpha/beta chains family. In terms of assembly, F-type ATPases have 2 components, CF(1) - the catalytic core - and CF(0) - the membrane proton channel. CF(1) has five subunits: alpha(3), beta(3), gamma(1), delta(1), epsilon(1). CF(0) has four main subunits: a(1), b(1), b'(1) and c(9-12).

Its subcellular location is the cell inner membrane. It carries out the reaction ATP + H2O + 4 H(+)(in) = ADP + phosphate + 5 H(+)(out). In terms of biological role, produces ATP from ADP in the presence of a proton gradient across the membrane. The catalytic sites are hosted primarily by the beta subunits. In Bradyrhizobium sp. (strain BTAi1 / ATCC BAA-1182), this protein is ATP synthase subunit beta 2.